Here is a 255-residue protein sequence, read N- to C-terminus: Zinc import ATP-binding protein ZnuC (255 aa).

One can recognise an ABC transporter domain in the interval 4 to 219; that stretch reads VDVDGLSLRY…PEYRALFGTG (216 aa). Residue 36–43 participates in ATP binding; the sequence is GPNGSGKT. Residues 234 to 255 are disordered; the sequence is EHDHHDGCAHGQATEDRTEAAE.

Belongs to the ABC transporter superfamily. Zinc importer (TC 3.A.1.15.5) family. In terms of assembly, the complex is composed of two ATP-binding proteins (ZnuC), two transmembrane proteins (ZnuB) and a solute-binding protein (ZnuA).

It is found in the cell inner membrane. The catalysed reaction is Zn(2+)(out) + ATP(in) + H2O(in) = Zn(2+)(in) + ADP(in) + phosphate(in) + H(+)(in). Part of the ABC transporter complex ZnuABC involved in zinc import. Responsible for energy coupling to the transport system. The chain is Zinc import ATP-binding protein ZnuC from Roseobacter denitrificans (strain ATCC 33942 / OCh 114) (Erythrobacter sp. (strain OCh 114)).